A 580-amino-acid polypeptide reads, in one-letter code: Mucolipin-1 (580 aa).

The interval 1–38 (MTAPAGPRGSETERLLTPNPGYGTQAGPSPAPPTPPEE) is disordered. Over 1 to 65 (MTAPAGPRGS…FRAKGRKPCK (65 aa)) the chain is Cytoplasmic. Serine 10 carries the post-translational modification Phosphoserine. Residues 11 to 16 (ETERLL) carry the Dileucine motif; mediates targeting to lysosomes motif. The tract at residues 42-62 (RRRLKYFFMSPCDKFRAKGRK) is interaction with phosphoinositides. A helical transmembrane segment spans residues 66 to 86 (LMLQVVKILVVTVQLILFGLS). Over 87–298 (NQLAVTFREE…VFQHGDNSFR (212 aa)) the chain is Extracellular. The tract at residues 107–121 (LGYSDGADDTFAAYT) is extracellular/lumenal pore loop. A disulfide bridge links cysteine 166 with cysteine 192. N-linked (GlcNAc...) asparagine glycosylation occurs at asparagine 230. The cysteines at positions 253 and 284 are disulfide-linked. Residues 299–321 (LLFDVVVILTCSLSFLLCARSLL) form a helical membrane-spanning segment. The Cytoplasmic portion of the chain corresponds to 322–350 (RGFLLQNEFVGFMWRQRGRVISLWERLEF). A helical transmembrane segment spans residues 351–371 (VNGWYILLVTSDVLTISGTIM). The Extracellular portion of the chain corresponds to 372 to 382 (KIGIEAKNLAS). Residues 383–405 (YDVCSILLGTSTLLVWVGVIRYL) form a helical membrane-spanning segment. At 406–427 (TFFHNYNILIATLRVALPSVMR) the chain is on the cytoplasmic side. The helical transmembrane segment at 428–448 (FCCCVAVIYLGYCFCGWIVLG) threads the bilayer. Over 449 to 456 (PYHVKFRS) the chain is Extracellular. The segment at residues 457 to 477 (LSMVSECLFSLINGDDMFVTF) is an intramembrane region (pore-forming). The Selectivity filter signature appears at 469 to 474 (NGDDMF). At 478–491 (AAMQAQQGRSSLVW) the chain is on the extracellular side. A helical membrane pass occupies residues 492-513 (LFSQLYLYSFISLFIYMVLSLF). Residues 514 to 580 (IALITGAYDT…PSEEHSLLVN (67 aa)) are Cytoplasmic-facing. Residues serine 557 and serine 559 each carry the phosphoserine; by PAK modification. The required for palmitoylation and association with membranes stretch occupies residues 565 to 567 (CCC). A Dileucine internalization motif; mediates AP2 complex-dependent internalization motif is present at residues 573–578 (EEHSLL).

This sequence belongs to the transient receptor (TC 1.A.4) family. Polycystin subfamily. MCOLN1 sub-subfamily. As to quaternary structure, homotetramer. Homooligomer. Can heterooligomerize with MCOLN2 or MCOLN3; heteromeric assemblies have different channel properties as compared to the respective homooligomers and may be tissue-specific. Interacts with PDCD6. Interacts with TMEM163. Interacts with LAPTM4B. Palmitoylated; involved in association with membranes. In terms of processing, phosphorylation by PKA inhibits channel activity. Dephosphorylation increases activity. Post-translationally, proteolytically cleaved probably involving multiple lysosomal proteases including cathepsin B; inhibits lysosomal channel activity. In terms of tissue distribution, widely expressed in adult and fetal tissues.

The protein localises to the late endosome membrane. Its subcellular location is the lysosome membrane. It localises to the cytoplasmic vesicle membrane. The protein resides in the cell projection. It is found in the phagocytic cup. The protein localises to the cytoplasmic vesicle. Its subcellular location is the phagosome membrane. It localises to the cell membrane. The catalysed reaction is Ca(2+)(in) = Ca(2+)(out). The enzyme catalyses Fe(2+)(in) = Fe(2+)(out). It catalyses the reaction Mg(2+)(in) = Mg(2+)(out). It carries out the reaction K(+)(in) = K(+)(out). The catalysed reaction is Na(+)(in) = Na(+)(out). Channel activity is controlled by multiple regulatory mechanisms in different subcellular compartments. Channel function is transiently modulated by changes in Ca(2+) in a pH-dependent manner; pH changes modify the aggregation state of unitary channels; a negative cooperativity between extracellular/lumenal Ca(2+) and H(+) is suggested. Regulated by phosphoinositides in a compartment-specific manner: in lysosomes activated by PtdIns(3,5)P2 (Phosphatidylinositol 3,5-bisphosphate) and at the plasma membrane inhibited by PtdIns(4,5)P2 (Phosphatidylinositol 4,5-bisphosphate). Its function is as follows. Nonselective cation channel probably playing a role in the regulation of membrane trafficking events and of metal homeostasis. Acts as a Ca(2+)-permeable cation channel with inwardly rectifying activity. Proposed to play a major role in Ca(2+) release from late endosome and lysosome vesicles to the cytoplasm, which is important for many lysosome-dependent cellular events, including the fusion and trafficking of these organelles, exocytosis and autophagy. Required for efficient uptake of large particles in macrophages in which Ca(2+) release from the lysosomes triggers lysosomal exocytosis. May also play a role in phagosome-lysosome fusion. Involved in lactosylceramide trafficking indicative for a role in the regulation of late endocytic membrane fusion/fission events. By mediating lysosomal Ca(2+) release is involved in regulation of mTORC1 signaling and in mTOR/TFEB-dependent lysosomal adaptation to environmental cues such as nutrient levels. Seems to act as lysosomal active oxygen species (ROS) sensor involved in ROS-induced TFEB activation and autophagy. Also functions as a Fe(2+) permeable channel in late endosomes and lysosomes. Also permeable to Mg(2+), Na(+). K(+) and Cs(+). Proposed to play a role in zinc homeostasis probably implicating its association with TMEM163 In adaptive immunity, TRPML2 and TRPML1 may play redundant roles in the function of the specialized lysosomes of B cells. In terms of biological role, may contribute to cellular lipase activity within the late endosomal pathway or at the cell surface which may be involved in processes of membrane reshaping and vesiculation, especially the growth of tubular structures. However, it is not known, whether it conveys the enzymatic activity directly, or merely facilitates the activity of an associated phospholipase. This Homo sapiens (Human) protein is Mucolipin-1.